A 516-amino-acid polypeptide reads, in one-letter code: GMP synthase [glutamine-hydrolyzing] (516 aa).

The Glutamine amidotransferase type-1 domain occupies 7–199 (KIIILDFGSQ…VFGLCKCQAT (193 aa)). The Nucleophile role is filled by cysteine 84. Residues histidine 173 and glutamate 175 contribute to the active site. Residues 200–391 (WTMQGFIESN…LGLPDEAVHR (192 aa)) enclose the GMPS ATP-PPase domain. 227 to 233 (SGGVDSS) is an ATP binding site.

Homodimer.

The enzyme catalyses XMP + L-glutamine + ATP + H2O = GMP + L-glutamate + AMP + diphosphate + 2 H(+). It participates in purine metabolism; GMP biosynthesis; GMP from XMP (L-Gln route): step 1/1. Catalyzes the synthesis of GMP from XMP. This is GMP synthase [glutamine-hydrolyzing] from Desulfotalea psychrophila (strain LSv54 / DSM 12343).